The sequence spans 363 residues: Ribosomal RNA large subunit methyltransferase M (363 aa).

S-adenosyl-L-methionine contacts are provided by residues S187, 220-223 (CPGG), D239, D259, and D276. K305 functions as the Proton acceptor in the catalytic mechanism.

This sequence belongs to the class I-like SAM-binding methyltransferase superfamily. RNA methyltransferase RlmE family. RlmM subfamily. As to quaternary structure, monomer.

It is found in the cytoplasm. The catalysed reaction is cytidine(2498) in 23S rRNA + S-adenosyl-L-methionine = 2'-O-methylcytidine(2498) in 23S rRNA + S-adenosyl-L-homocysteine + H(+). Functionally, catalyzes the 2'-O-methylation at nucleotide C2498 in 23S rRNA. The sequence is that of Ribosomal RNA large subunit methyltransferase M from Shewanella loihica (strain ATCC BAA-1088 / PV-4).